Here is a 466-residue protein sequence, read N- to C-terminus: Cell division protein FtsP (466 aa).

Positions M1 to A28 form a signal peptide, tat-type signal.

Belongs to the FtsP family. Predicted to be exported by the Tat system. The position of the signal peptide cleavage has not been experimentally proven.

Its subcellular location is the periplasm. Cell division protein that is required for growth during stress conditions. May be involved in protecting or stabilizing the divisomal assembly under conditions of stress. The sequence is that of Cell division protein FtsP from Actinobacillus succinogenes (strain ATCC 55618 / DSM 22257 / CCUG 43843 / 130Z).